The following is a 135-amino-acid chain: UPF0355 protein MRSA252 (135 aa).

This sequence belongs to the UPF0355 family.

The polypeptide is UPF0355 protein MRSA252 (Staphylococcus aureus (strain MRSA252)).